We begin with the raw amino-acid sequence, 137 residues long: 5-hydroxytryptamine receptor 4 (137 aa).

The helical transmembrane segment at Thr12–Ile35 threads the bilayer. The N-linked (GlcNAc...) asparagine glycan is linked to Asn58. Residues Asn67–Tyr90 form a helical membrane-spanning segment. A disordered region spans residues Ala112–Lys137.

Belongs to the G-protein coupled receptor 1 family. As to quaternary structure, interacts (via C-terminus 330-346 AA) with GRK5; this interaction is promoted by 5-HT (serotonin).

The protein localises to the cell membrane. It is found in the endosome membrane. Its function is as follows. G-protein coupled receptor for 5-hydroxytryptamine (serotonin), a biogenic hormone that functions as a neurotransmitter, a hormone and a mitogen. Ligand binding causes a conformation change that triggers signaling via guanine nucleotide-binding proteins (G proteins) and modulates the activity of downstream effectors. HTR4 is coupled to G(s) G alpha proteins and mediates activation of adenylate cyclase activity. The protein is 5-hydroxytryptamine receptor 4 (HTR4) of Sus scrofa (Pig).